Reading from the N-terminus, the 54-residue chain is Photosystem II reaction center protein K (54 aa).

Residues 1-17 (MLLEHVTITLLNNTSFA) constitute a propeptide that is removed on maturation. A helical transmembrane segment spans residues 29-49 (LIDVLPIIPLLFLLLAFVWQA).

The protein belongs to the PsbK family. As to quaternary structure, PSII is composed of 1 copy each of membrane proteins PsbA, PsbB, PsbC, PsbD, PsbE, PsbF, PsbH, PsbI, PsbJ, PsbK, PsbL, PsbM, PsbT, PsbY, PsbZ, Psb30/Ycf12, at least 3 peripheral proteins of the oxygen-evolving complex and a large number of cofactors. It forms dimeric complexes.

It is found in the plastid. It localises to the chloroplast thylakoid membrane. In terms of biological role, one of the components of the core complex of photosystem II (PSII). PSII is a light-driven water:plastoquinone oxidoreductase that uses light energy to abstract electrons from H(2)O, generating O(2) and a proton gradient subsequently used for ATP formation. It consists of a core antenna complex that captures photons, and an electron transfer chain that converts photonic excitation into a charge separation. The polypeptide is Photosystem II reaction center protein K (Euglena mutabilis).